The following is a 572-amino-acid chain: Proline--tRNA ligase (572 aa).

Belongs to the class-II aminoacyl-tRNA synthetase family. ProS type 1 subfamily. In terms of assembly, homodimer.

It localises to the cytoplasm. The enzyme catalyses tRNA(Pro) + L-proline + ATP = L-prolyl-tRNA(Pro) + AMP + diphosphate. In terms of biological role, catalyzes the attachment of proline to tRNA(Pro) in a two-step reaction: proline is first activated by ATP to form Pro-AMP and then transferred to the acceptor end of tRNA(Pro). As ProRS can inadvertently accommodate and process non-cognate amino acids such as alanine and cysteine, to avoid such errors it has two additional distinct editing activities against alanine. One activity is designated as 'pretransfer' editing and involves the tRNA(Pro)-independent hydrolysis of activated Ala-AMP. The other activity is designated 'posttransfer' editing and involves deacylation of mischarged Ala-tRNA(Pro). The misacylated Cys-tRNA(Pro) is not edited by ProRS. The sequence is that of Proline--tRNA ligase from Cronobacter sakazakii (strain ATCC BAA-894) (Enterobacter sakazakii).